We begin with the raw amino-acid sequence, 29 residues long: Cytochrome b6-f complex subunit 8 (29 aa).

The chain crosses the membrane as a helical span at residues 3–23; the sequence is ITSIAWGALMVVFTFSLSLVV.

This sequence belongs to the PetN family. In terms of assembly, the 4 large subunits of the cytochrome b6-f complex are cytochrome b6, subunit IV (17 kDa polypeptide, PetD), cytochrome f and the Rieske protein, while the 4 small subunits are PetG, PetL, PetM and PetN. The complex functions as a dimer.

The protein resides in the plastid membrane. Its function is as follows. Component of the cytochrome b6-f complex, which mediates electron transfer between photosystem II (PSII) and photosystem I (PSI), cyclic electron flow around PSI, and state transitions. This chain is Cytochrome b6-f complex subunit 8, found in Aneura mirabilis (Parasitic liverwort).